A 487-amino-acid chain; its full sequence is Proline--tRNA ligase (487 aa).

It belongs to the class-II aminoacyl-tRNA synthetase family. ProS type 3 subfamily. Homodimer.

It localises to the cytoplasm. It catalyses the reaction tRNA(Pro) + L-proline + ATP = L-prolyl-tRNA(Pro) + AMP + diphosphate. In terms of biological role, catalyzes the attachment of proline to tRNA(Pro) in a two-step reaction: proline is first activated by ATP to form Pro-AMP and then transferred to the acceptor end of tRNA(Pro). In Pyrobaculum neutrophilum (strain DSM 2338 / JCM 9278 / NBRC 100436 / V24Sta) (Thermoproteus neutrophilus), this protein is Proline--tRNA ligase.